We begin with the raw amino-acid sequence, 128 residues long: Large ribosomal subunit protein bL17 (128 aa).

The protein belongs to the bacterial ribosomal protein bL17 family. Part of the 50S ribosomal subunit. Contacts protein L32.

The chain is Large ribosomal subunit protein bL17 from Streptococcus pyogenes serotype M5 (strain Manfredo).